We begin with the raw amino-acid sequence, 364 residues long: Triacylglycerol lipase (364 aa).

Residues 1–44 (MARTMRSRVVAGAVACAMSIAPFAGTTAVMTLATTHAAMAATAP) form the signal peptide. Residues 54-266 (PIILVHGLSG…AIQPTLSVFG (213 aa)) enclose the AB hydrolase-1 domain. L61 contributes to the substrate binding site. S131 functions as the Nucleophile in the catalytic mechanism. Residue Q132 participates in substrate binding. A disulfide bond links C234 and C314. D286 is a binding site for Ca(2+). Residues D308 and H330 each act as charge relay system in the active site. D332, Q336, and V340 together coordinate Ca(2+).

This sequence belongs to the AB hydrolase superfamily. Pseudomonas lipase family. Monomer. Ca(2+) is required as a cofactor.

The protein resides in the secreted. It carries out the reaction a triacylglycerol + H2O = a diacylglycerol + a fatty acid + H(+). Its activity is regulated as follows. Inhibited by RC-(Rp,Sp)- and SC-(Rp,Sp)-1,2-dioctylcarbamoylglycero-3-O-p-nitrophenyl octylphosphonate. Also inhibited by diethyl-p-nitrophenylphosphate (E600). Its function is as follows. Catalyzes the hydrolysis of triacylglycerol. It shows a preference for triacylglycerols with a chain length between 6 and 12 carbons. The chain is Triacylglycerol lipase from Burkholderia cepacia (Pseudomonas cepacia).